The primary structure comprises 48 residues: ATP synthase protein 8 (48 aa).

A helical transmembrane segment spans residues 16 to 36 (GFLLMTILLVLFSQFFLPMIL).

It belongs to the ATPase protein 8 family. F-type ATPases have 2 components, CF(1) - the catalytic core - and CF(0) - the membrane proton channel.

The protein localises to the mitochondrion membrane. Mitochondrial membrane ATP synthase (F(1)F(0) ATP synthase or Complex V) produces ATP from ADP in the presence of a proton gradient across the membrane which is generated by electron transport complexes of the respiratory chain. F-type ATPases consist of two structural domains, F(1) - containing the extramembraneous catalytic core and F(0) - containing the membrane proton channel, linked together by a central stalk and a peripheral stalk. During catalysis, ATP synthesis in the catalytic domain of F(1) is coupled via a rotary mechanism of the central stalk subunits to proton translocation. Part of the complex F(0) domain. Minor subunit located with subunit a in the membrane. This Vanderwaltozyma polyspora (strain ATCC 22028 / DSM 70294 / BCRC 21397 / CBS 2163 / NBRC 10782 / NRRL Y-8283 / UCD 57-17) (Kluyveromyces polysporus) protein is ATP synthase protein 8 (ATP8).